A 300-amino-acid chain; its full sequence is N-carbamoylputrescine amidase (300 aa).

Residues V8 to L266 form the CN hydrolase domain. The Proton acceptor role is filled by E47. K120 functions as the Proton donor in the catalytic mechanism. C157 functions as the Nucleophile in the catalytic mechanism.

The protein belongs to the carbon-nitrogen hydrolase superfamily. Homooctamer.

It carries out the reaction N-carbamoylputrescine + H2O + 2 H(+) = putrescine + NH4(+) + CO2. It functions in the pathway amine and polyamine biosynthesis; putrescine biosynthesis via agmatine pathway; putrescine from N-carbamoylputrescine (amidase route): step 1/1. Involved in polyamine biosynthesis. The sequence is that of N-carbamoylputrescine amidase (CPA) from Solanum tuberosum (Potato).